Consider the following 488-residue polypeptide: Regulatory protein ViaA (488 aa).

This sequence belongs to the ViaA family. In terms of assembly, homodimer. Interacts with RavA.

Its subcellular location is the cytoplasm. Its function is as follows. Component of the RavA-ViaA chaperone complex, which may act on the membrane to optimize the function of some of the respiratory chains. ViaA stimulates the ATPase activity of RavA. The sequence is that of Regulatory protein ViaA from Yersinia pseudotuberculosis serotype O:1b (strain IP 31758).